The chain runs to 385 residues: Probable splicing factor YJU2B (385 aa).

Positions 1-26 (MGERKGQNKYYPPDFNPEKHGSLNRY) are disordered. A Phosphoserine modification is found at Ser-40. Residues 182-214 (LNSMLRRHFREKKKAMQEEEEKDQALQAKASLA) adopt a coiled-coil conformation. A disordered region spans residues 257–385 (PSAQGPSASS…VADYSDSESE (129 aa)). Over residues 258–271 (SAQGPSASSSKASS) the composition is skewed to low complexity. Ser-306 carries the post-translational modification Phosphoserine. Residues 359–373 (GSSQEDLLNPNTPNA) are compositionally biased toward polar residues.

This sequence belongs to the CWC16 family.

Its subcellular location is the nucleus. Functionally, may be involved in mRNA splicing. This chain is Probable splicing factor YJU2B (Yju2b), found in Mus musculus (Mouse).